A 506-amino-acid chain; its full sequence is MAAMMASITSELLFFLPFILLALLTFYTTTVAKCHGGHWWRGGTTPAKRKRMNLPPGAAGWPLVGETFGYLRAHPATSVGRFMEQHIARYGKIYRSSLFGERTVVSADAGLNRYILQNEGRLFECSYPRSIGGILGKWSMLVLVGDPHREMRAISLNFLSSVRLRAVLLPEVERHTLLVLRAWLPSSTFSAQHQAKKFTFNLMAKNIMSMDPGEEETERLRREYITFMKGVVSAPLNLPGTPYWKALKSRAAILGVIERKMEERVEKLSKEDASVEQDDLLGWALKQSNLSKEQILDLLLSLLFAGHETSSMALALAIFFLEGCPKAVQELREEHLGIARRQRLRGECKLSWEDYKEMVFTQCVINETLRLGNVVRFLHRKVIKDVHYKGYDIPSGWKILPVLAAVHLDSSLYEDPQRFNPWRWKSSGSSGGLAQSSSFMPYGGGTRLCAGSELAKLEMAVFLHHLVLNFRWELAEPDQAFVFPFVDFPKGLPIRVHRIAQDDEQE.

A helical membrane pass occupies residues 12–32; sequence LLFFLPFILLALLTFYTTTVA. A heme-binding site is contributed by Cys-449.

Belongs to the cytochrome P450 family. Requires heme as cofactor.

The protein resides in the membrane. It catalyses the reaction a C28-steroid + reduced [NADPH--hemoprotein reductase] + O2 = a (22S)-22-hydroxy C28-steroid + oxidized [NADPH--hemoprotein reductase] + H2O + H(+). It carries out the reaction campesterol + reduced [NADPH--hemoprotein reductase] + O2 = (22S)-22-hydroxycampesterol + oxidized [NADPH--hemoprotein reductase] + H2O + H(+). The enzyme catalyses campestanol + reduced [NADPH--hemoprotein reductase] + O2 = 6-deoxycathasterone + oxidized [NADPH--hemoprotein reductase] + H2O + H(+). Its pathway is plant hormone biosynthesis; brassinosteroid biosynthesis. Functionally, catalyzes the C22-alpha-hydroxylation step in brassinosteroid biosynthesis, which is the rate-limiting step in this biosynthetic pathway. Catalyzes the conversion of campesterol (CR) to (22S)-22-hydroxycampesterol (22-OHCR, 22-hydroxyCR) and of campestanol (CN) to 6-deoxocathasterone (6-deoxoCT). This Oryza sativa subsp. indica (Rice) protein is Steroid (22S)-hydroxylase.